The primary structure comprises 90 residues: Probable Fe(2+)-trafficking protein (90 aa).

It belongs to the Fe(2+)-trafficking protein family.

In terms of biological role, could be a mediator in iron transactions between iron acquisition and iron-requiring processes, such as synthesis and/or repair of Fe-S clusters in biosynthetic enzymes. The protein is Probable Fe(2+)-trafficking protein of Paraburkholderia xenovorans (strain LB400).